The following is a 525-amino-acid chain: MSVEKQTAMRRTFAIISHPDAGKTTLTEKLLLFGGAIQLAGTIKSRKAARHATSDWMELEKQRGISVTTSVMQFPYKDYLINLLDTPGHADFTEDTYRTLTAVDSALMVIDAAKGVEPRTIKLMEVCRLRHTPIMTFINKMDRDTRPSIELLDEIESILRIHCAPVTWPIGMGKYFKGIYHLIEDAIYLYQPGKHERVGESERIEGINNPELDKKLGDLASELRNEIELVKGASHPFEREGYLKGELTPIFFGSAINNFGVGELLDAFVKEAPPPQGRETNSRLVKPEEEKFSGFVFKIQANMDPGHRDRIAFLRIASGQYQKGMKAYHVRLKKEIQINNALTFMAGKRENAEEAWPGDIIGLHNHGTIQIGDTFTQGERFKFTGIPNFASELFRLVRLKDPLKQKALLKGLTQLSEEGATQLFRPLDSNELILGAVGLLQFDVVAYRLENEYNVKCVYESVNVVTARWVICDDKAVLERFNQEQSRNLAYDGGGHLTYLAPSRVNLEITMEKWPEIQFSETREH.

The region spanning 8–276 (AMRRTFAIIS…AFVKEAPPPQ (269 aa)) is the tr-type G domain. GTP-binding positions include 17 to 24 (SHPDAGKT), 85 to 89 (DTPGH), and 139 to 142 (NKMD).

The protein belongs to the TRAFAC class translation factor GTPase superfamily. Classic translation factor GTPase family. PrfC subfamily.

It is found in the cytoplasm. Its function is as follows. Increases the formation of ribosomal termination complexes and stimulates activities of RF-1 and RF-2. It binds guanine nucleotides and has strong preference for UGA stop codons. It may interact directly with the ribosome. The stimulation of RF-1 and RF-2 is significantly reduced by GTP and GDP, but not by GMP. This Coxiella burnetii (strain RSA 331 / Henzerling II) protein is Peptide chain release factor 3.